The primary structure comprises 406 residues: MECALDAQSLISISLRKIHSSRTQRGGIKLHKNLLVSYVLRNARQLYLSERYAELYRRQQQQQQQQPPHHQHQHLAYAAPGMPASAADFGPLQLGGGGDAEAREPVARHQLHQLHQLHQLHLQQQLHQHQHPAPRGCTAAAPVAVAGAPAGCAGALSELPGCAALQPPHGAPHRGQHLEPLQPGPAPLPPPAPAALCPRDPRVPAACSAPSVLPGAAPSTVAASSPPASTAPSSSTGFYRGAYPAPSDFGVHCSSQTTVLDLDTHVVTTVENGYLHQDCCASAHCPCCGQGAPGPGLASAAGCKRKYYPGQEEEDDEEDAGDLGAEPPGGTPFAPCKRARFEDFCPDSSPDASNISNLISIFGSGFSGLVSRQPDSSEQPPPLNGQLCAKQALASLGAWTRAIVAF.

Disordered regions lie at residues 166-195 (QPPHGAPHRGQHLEPLQPGPAPLPPPAPAA) and 216-235 (AAPSTVAASSPPASTAPSSS). Residues 182–193 (QPGPAPLPPPAP) are compositionally biased toward pro residues.

Belongs to the IER family.

The chain is Immediate early response gene 5-like protein (Ier5l) from Mus musculus (Mouse).